We begin with the raw amino-acid sequence, 211 residues long: Claudin-13 (211 aa).

The Cytoplasmic portion of the chain corresponds to 1-8 (MVVSKQEA). The helical transmembrane segment at 9–29 (ISFSVTSLGWVGAIVSCVLPV) threads the bilayer. Residues 30–80 (WRVTFPDDETDPDATIWEGLWHICQVRENRWIQCTLYDTRILVAQDIKVSR) are Extracellular-facing. The chain crosses the membrane as a helical span at residues 81–101 (VFMVICTIGTWLGLLLCVLGD). At 102–118 (WRINCFMNFTIEENLLK) the chain is on the cytoplasmic side. A helical transmembrane segment spans residues 119-139 (VAGGMFLSVGLLMLVPLSWVT). At 140–165 (HNIIHGFFNPLLGFSKKVQMGSSLSL) the chain is on the extracellular side. Residues 166 to 186 (AWTSSLLLLLGGILLCVNIPV) traverse the membrane as a helical segment. Over 187–211 (CRDFPRCIETPSARPSGANNDTLDV) the chain is Cytoplasmic.

Belongs to the claudin family.

The protein resides in the cell junction. Its subcellular location is the tight junction. It localises to the cell membrane. Functionally, plays a major role in tight junction-specific obliteration of the intercellular space, through calcium-independent cell-adhesion activity. The polypeptide is Claudin-13 (Cldn13) (Mus musculus (Mouse)).